Reading from the N-terminus, the 549-residue chain is Oxygen-dependent choline dehydrogenase (549 aa).

An FAD-binding site is contributed by 4 to 33 (DFVIIGSGSAGSAMAYRLSEDGRYSVIVIE). His-465 functions as the Proton acceptor in the catalytic mechanism.

This sequence belongs to the GMC oxidoreductase family. FAD serves as cofactor.

It carries out the reaction choline + A = betaine aldehyde + AH2. The enzyme catalyses betaine aldehyde + NAD(+) + H2O = glycine betaine + NADH + 2 H(+). It participates in amine and polyamine biosynthesis; betaine biosynthesis via choline pathway; betaine aldehyde from choline (cytochrome c reductase route): step 1/1. Functionally, involved in the biosynthesis of the osmoprotectant glycine betaine. Catalyzes the oxidation of choline to betaine aldehyde and betaine aldehyde to glycine betaine at the same rate. The polypeptide is Oxygen-dependent choline dehydrogenase (Brucella canis (strain ATCC 23365 / NCTC 10854 / RM-666)).